The sequence spans 308 residues: Ribosomal RNA small subunit methyltransferase A (308 aa).

6 residues coordinate S-adenosyl-L-methionine: Asn-35, Val-37, Gly-62, Glu-83, Asp-113, and Asn-136.

The protein belongs to the class I-like SAM-binding methyltransferase superfamily. rRNA adenine N(6)-methyltransferase family. RsmA subfamily.

It is found in the cytoplasm. It catalyses the reaction adenosine(1518)/adenosine(1519) in 16S rRNA + 4 S-adenosyl-L-methionine = N(6)-dimethyladenosine(1518)/N(6)-dimethyladenosine(1519) in 16S rRNA + 4 S-adenosyl-L-homocysteine + 4 H(+). Its function is as follows. Specifically dimethylates two adjacent adenosines (A1518 and A1519) in the loop of a conserved hairpin near the 3'-end of 16S rRNA in the 30S particle. May play a critical role in biogenesis of 30S subunits. The sequence is that of Ribosomal RNA small subunit methyltransferase A from Bifidobacterium longum (strain NCC 2705).